The primary structure comprises 310 residues: Acetaldehyde dehydrogenase 1 (310 aa).

An NAD(+)-binding site is contributed by 12–15 (SGNI). The active-site Acyl-thioester intermediate is Cys132. NAD(+)-binding positions include 163–171 (SAGPGTRAN) and Asn287.

Belongs to the acetaldehyde dehydrogenase family.

The catalysed reaction is acetaldehyde + NAD(+) + CoA = acetyl-CoA + NADH + H(+). This is Acetaldehyde dehydrogenase 1 from Pseudomonas putida (strain W619).